Consider the following 138-residue polypeptide: Large ribosomal subunit protein bL19 (138 aa).

It belongs to the bacterial ribosomal protein bL19 family.

Its function is as follows. This protein is located at the 30S-50S ribosomal subunit interface and may play a role in the structure and function of the aminoacyl-tRNA binding site. This chain is Large ribosomal subunit protein bL19, found in Rickettsia canadensis (strain McKiel).